A 341-amino-acid chain; its full sequence is N-acetyl-gamma-glutamyl-phosphate reductase (341 aa).

Cysteine 147 is a catalytic residue.

This sequence belongs to the NAGSA dehydrogenase family. Type 1 subfamily.

Its subcellular location is the cytoplasm. It catalyses the reaction N-acetyl-L-glutamate 5-semialdehyde + phosphate + NADP(+) = N-acetyl-L-glutamyl 5-phosphate + NADPH + H(+). Its pathway is amino-acid biosynthesis; L-arginine biosynthesis; N(2)-acetyl-L-ornithine from L-glutamate: step 3/4. Its function is as follows. Catalyzes the NADPH-dependent reduction of N-acetyl-5-glutamyl phosphate to yield N-acetyl-L-glutamate 5-semialdehyde. This is N-acetyl-gamma-glutamyl-phosphate reductase from Staphylococcus epidermidis (strain ATCC 35984 / DSM 28319 / BCRC 17069 / CCUG 31568 / BM 3577 / RP62A).